The chain runs to 717 residues: DNA-binding protein RFX2 (717 aa).

The segment at 1–28 is disordered; the sequence is MQNSEGGADSPASVALRPAAQPMPASPQ. The residue at position 26 (Ser-26) is a Phosphoserine. A DNA-binding region (RFX-type winged-helix) is located at residues 194–269; it reads HLQWLLDNYE…YHYYGIRLKP (76 aa). Residues 286-318 are disordered; sequence RQQPTHQKPRYRPAQKSDSLGDGSAHSNMHGMP. A Phosphoserine modification is found at Ser-411. Positions 685–710 are enriched in basic and acidic residues; the sequence is DGHSSEADVDGRSLGEPLVKRERSDP. Residues 685 to 717 form a disordered region; that stretch reads DGHSSEADVDGRSLGEPLVKRERSDPSHPLQGI.

It belongs to the RFX family. As to quaternary structure, homodimer; probably only forms homodimers in testis. Heterodimer; heterodimerizes with RFX1 and RFX3.

It localises to the nucleus. The protein resides in the cytoplasm. Transcription factor that acts as a key regulator of spermatogenesis. Acts by regulating expression of genes required for the haploid phase during spermiogenesis, such as genes required for cilium assembly and function. Recognizes and binds the X-box, a regulatory motif with DNA sequence 5'-GTNRCC(0-3N)RGYAAC-3' present on promoters. Probably activates transcription of the testis-specific histone gene H1-6. The sequence is that of DNA-binding protein RFX2 (Rfx2) from Mus musculus (Mouse).